We begin with the raw amino-acid sequence, 456 residues long: Probable glycine dehydrogenase (decarboxylating) subunit 1 (456 aa).

This sequence belongs to the GcvP family. N-terminal subunit subfamily. In terms of assembly, the glycine cleavage system is composed of four proteins: P, T, L and H. In this organism, the P 'protein' is a heterodimer of two subunits.

It catalyses the reaction N(6)-[(R)-lipoyl]-L-lysyl-[glycine-cleavage complex H protein] + glycine + H(+) = N(6)-[(R)-S(8)-aminomethyldihydrolipoyl]-L-lysyl-[glycine-cleavage complex H protein] + CO2. In terms of biological role, the glycine cleavage system catalyzes the degradation of glycine. The P protein binds the alpha-amino group of glycine through its pyridoxal phosphate cofactor; CO(2) is released and the remaining methylamine moiety is then transferred to the lipoamide cofactor of the H protein. In Legionella pneumophila (strain Corby), this protein is Probable glycine dehydrogenase (decarboxylating) subunit 1.